The sequence spans 459 residues: GTPase Der (459 aa).

2 EngA-type G domains span residues proline 4–threonine 169 and isoleucine 179–arginine 355. GTP is bound by residues glycine 10–serine 17, aspartate 57–leucine 61, asparagine 120–glutamate 123, glycine 185–serine 192, aspartate 232–isoleucine 236, and asparagine 297–aspartate 300. The KH-like domain occupies lysine 356–serine 441.

Belongs to the TRAFAC class TrmE-Era-EngA-EngB-Septin-like GTPase superfamily. EngA (Der) GTPase family. As to quaternary structure, associates with the 50S ribosomal subunit.

Its function is as follows. GTPase that plays an essential role in the late steps of ribosome biogenesis. The chain is GTPase Der from Synechococcus sp. (strain JA-2-3B'a(2-13)) (Cyanobacteria bacterium Yellowstone B-Prime).